Here is a 233-residue protein sequence, read N- to C-terminus: Large ribosomal subunit protein uL1 (233 aa).

This sequence belongs to the universal ribosomal protein uL1 family. Part of the 50S ribosomal subunit.

In terms of biological role, binds directly to 23S rRNA. The L1 stalk is quite mobile in the ribosome, and is involved in E site tRNA release. Protein L1 is also a translational repressor protein, it controls the translation of the L11 operon by binding to its mRNA. The sequence is that of Large ribosomal subunit protein uL1 from Shewanella sp. (strain ANA-3).